Reading from the N-terminus, the 427-residue chain is Enolase (427 aa).

Residue glutamine 163 coordinates (2R)-2-phosphoglycerate. The Proton donor role is filled by glutamate 205. Positions 242, 285, and 312 each coordinate Mg(2+). Lysine 337, arginine 366, serine 367, and lysine 388 together coordinate (2R)-2-phosphoglycerate. The active-site Proton acceptor is the lysine 337.

The protein belongs to the enolase family. Mg(2+) serves as cofactor.

The protein localises to the cytoplasm. Its subcellular location is the secreted. It localises to the cell surface. The catalysed reaction is (2R)-2-phosphoglycerate = phosphoenolpyruvate + H2O. It functions in the pathway carbohydrate degradation; glycolysis; pyruvate from D-glyceraldehyde 3-phosphate: step 4/5. Its function is as follows. Catalyzes the reversible conversion of 2-phosphoglycerate (2-PG) into phosphoenolpyruvate (PEP). It is essential for the degradation of carbohydrates via glycolysis. The chain is Enolase from Bradyrhizobium sp. (strain ORS 278).